The primary structure comprises 104 residues: Growth-regulated protein homolog (104 aa).

The first 31 residues, 1–31 (MAPAATAAAPRLLRAALLLLLLVAAGRRAAG), serve as a signal peptide directing secretion. 2 cysteine pairs are disulfide-bonded: Cys-40-Cys-66 and Cys-42-Cys-82.

The protein belongs to the intercrine alpha (chemokine CxC) family.

It localises to the secreted. In terms of biological role, plays a role in monocyte adhesion to the endothelium. This chain is Growth-regulated protein homolog, found in Oryctolagus cuniculus (Rabbit).